The following is a 689-amino-acid chain: DNA topoisomerase 1 (689 aa).

The Toprim domain maps to 3–113 (DNLVIVESPA…KENRVVFNEI (111 aa)). Residues E9 and D82 each coordinate Mg(2+). The 429-residue stretch at 129-557 (EMDLVDAQQA…FYNSFKQDVE (429 aa)) folds into the Topo IA-type catalytic domain. The interval 163-168 (SAGRVQ) is interaction with DNA. Y298 serves as the catalytic O-(5'-phospho-DNA)-tyrosine intermediate. 3 C4-type zinc fingers span residues 577 to 603 (CEVCGSPMVIKMGRYGKFMACSNFPDC), 617 to 645 (CPKCNEGDVVERKSKKNRIFYGCSRYPEC), and 658 to 681 (CPKCHHYLVNKKKGKSSQVVCSNC).

The protein belongs to the type IA topoisomerase family. Monomer. Requires Mg(2+) as cofactor.

It carries out the reaction ATP-independent breakage of single-stranded DNA, followed by passage and rejoining.. Its function is as follows. Releases the supercoiling and torsional tension of DNA, which is introduced during the DNA replication and transcription, by transiently cleaving and rejoining one strand of the DNA duplex. Introduces a single-strand break via transesterification at a target site in duplex DNA. The scissile phosphodiester is attacked by the catalytic tyrosine of the enzyme, resulting in the formation of a DNA-(5'-phosphotyrosyl)-enzyme intermediate and the expulsion of a 3'-OH DNA strand. The free DNA strand then undergoes passage around the unbroken strand, thus removing DNA supercoils. Finally, in the religation step, the DNA 3'-OH attacks the covalent intermediate to expel the active-site tyrosine and restore the DNA phosphodiester backbone. This is DNA topoisomerase 1 from Staphylococcus epidermidis (strain ATCC 35984 / DSM 28319 / BCRC 17069 / CCUG 31568 / BM 3577 / RP62A).